The following is a 173-amino-acid chain: Probable calcium-binding protein CML14 (173 aa).

EF-hand domains lie at 21–56 (SQLKQLRELFRRFDMNGDGSLTQLELAALLRSLGLR), 57–92 (PTGDEVHALLAGMDANGNGSVEFDELAAAIAPVLTT), 97–132 (VDQAQLLEVFRAFDRDGNGFISAAELARSMARLGQP), and 133–168 (LTFEELTRMMRDADTDGDGVISFKEFAAVMAKSALD). Ca(2+) contacts are provided by Asp34, Asn36, Asp38, Ser40, Glu45, Asp70, Asn72, Asn74, Ser76, Glu81, Asp110, Asp112, Asn114, Glu121, Asp146, Asp148, Asp150, and Glu157.

In terms of biological role, potential calcium sensor. The chain is Probable calcium-binding protein CML14 (CML14) from Oryza sativa subsp. japonica (Rice).